The sequence spans 373 residues: SAM domain-containing protein SAMSN-1 (373 aa).

Residues 1–72 (MLKRKPSNVS…GGGLGKKMRA (72 aa)) form a disordered region. Residues 20 to 25 (RSSSFG) carry the Important for interaction with 14-3-3 proteins motif. Ser23 and Ser34 each carry phosphoserine. The span at 37 to 48 (KPDDSTEAHEGD) shows a compositional bias: basic and acidic residues. Over residues 50–61 (TNGSGEQSKTSN) the composition is skewed to polar residues. Ser74 carries the phosphoserine modification. Position 76 is a phosphothreonine (Thr76). Phosphoserine is present on residues Ser90 and Ser119. A disordered region spans residues 91–153 (EEKDEEDGEN…DGTSNRDSFR (63 aa)). The segment covering 123 to 146 (SDSMDSLYSGQSSSSGITSCSDGT) has biased composition (low complexity). Phosphotyrosine is present on Tyr160. One can recognise an SH3 domain in the interval 163-224 (PFCGRARVHT…KFIYVDVISE (62 aa)). An SAM domain is found at 241-305 (KKSKTLQEFL…LSAAENFLEE (65 aa)). The segment at 337–359 (DSGCYISSGNSDNGKEDLESENL) is disordered.

In terms of assembly, interacts with FASLG. Interacts with phosphotyrosine containing proteins. Interacts (via SH3 domain) with CTTN. Interacts (phosphorylated at Ser-23) with YWHAB, YWHAE, YWHAG, YWHAH, YWHAZ and SFN. Interacts directly with SAP30 and HDAC1. Identified in a complex with SAP30 and HDAC1. As to expression, detected in peripheral blood B-cells (at protein level). Detected in spleen, liver and peripheral blood.

It localises to the nucleus. The protein resides in the cytoplasm. The protein localises to the cell projection. It is found in the ruffle. Negative regulator of B-cell activation. Down-regulates cell proliferation (in vitro). Promotes RAC1-dependent membrane ruffle formation and reorganization of the actin cytoskeleton. Regulates cell spreading and cell polarization. Stimulates HDAC1 activity. Regulates LYN activity by modulating its tyrosine phosphorylation. The protein is SAM domain-containing protein SAMSN-1 (SAMSN1) of Homo sapiens (Human).